The primary structure comprises 934 residues: Sorting nexin-14 (934 aa).

2 helical membrane passes run 27–47 (YPVI…LNQY) and 48–68 (LHIL…YCSL). The 175-residue stretch at 129 to 303 (PSKVDASISE…MVLIFIDDSP (175 aa)) folds into the PXA domain. Residues 335–467 (DLKEIREQQD…CHSDEYFRHL (133 aa)) form the RGS domain. The region spanning 557–677 (WTISIPYVDF…DFLSPFSMES (121 aa)) is the PX domain.

It belongs to the sorting nexin family.

It is found in the lysosome membrane. It localises to the late endosome membrane. The protein resides in the cell projection. Its subcellular location is the dendrite. In terms of biological role, plays a role in maintaining normal neuronal excitability and synaptic transmission. May be involved in several stages of intracellular trafficking. Required for autophagosome clearance, possibly by mediating the fusion of lysosomes with autophagosomes. Binds phosphatidylinositol 3,5-bisphosphate (PtdIns(3,5)P2), a key component of late endosomes/lysosomes. Does not bind phosphatidylinositol 3-phosphate (PtdIns(3P)). The chain is Sorting nexin-14 from Danio rerio (Zebrafish).